The chain runs to 250 residues: Malonyl-[acyl-carrier protein] O-methyltransferase (250 aa).

The protein belongs to the methyltransferase superfamily.

It catalyses the reaction malonyl-[ACP] + S-adenosyl-L-methionine = malonyl-[ACP] methyl ester + S-adenosyl-L-homocysteine. It participates in cofactor biosynthesis; biotin biosynthesis. Functionally, converts the free carboxyl group of a malonyl-thioester to its methyl ester by transfer of a methyl group from S-adenosyl-L-methionine (SAM). It allows to synthesize pimeloyl-ACP via the fatty acid synthetic pathway. The protein is Malonyl-[acyl-carrier protein] O-methyltransferase of Neorickettsia risticii (strain Illinois).